The primary structure comprises 352 residues: Nicotinate-nucleotide--dimethylbenzimidazole phosphoribosyltransferase (352 aa).

The active-site Proton acceptor is the Glu-318.

Belongs to the CobT family.

The enzyme catalyses 5,6-dimethylbenzimidazole + nicotinate beta-D-ribonucleotide = alpha-ribazole 5'-phosphate + nicotinate + H(+). It participates in nucleoside biosynthesis; alpha-ribazole biosynthesis; alpha-ribazole from 5,6-dimethylbenzimidazole: step 1/2. In terms of biological role, catalyzes the synthesis of alpha-ribazole-5'-phosphate from nicotinate mononucleotide (NAMN) and 5,6-dimethylbenzimidazole (DMB). This chain is Nicotinate-nucleotide--dimethylbenzimidazole phosphoribosyltransferase, found in Geobacter sulfurreducens (strain ATCC 51573 / DSM 12127 / PCA).